Reading from the N-terminus, the 124-residue chain is Small ribosomal subunit protein uS12 (124 aa).

A disordered region spans residues 1–24; the sequence is MPTISQLVRKGRAKITKKSKSAAL. Residues 9–20 are compositionally biased toward basic residues; the sequence is RKGRAKITKKSK. Aspartate 89 bears the 3-methylthioaspartic acid mark. Positions 105–124 are disordered; sequence AGVEGRTQRRSKYGAKRPKK. Residues 112-124 show a composition bias toward basic residues; sequence QRRSKYGAKRPKK.

Belongs to the universal ribosomal protein uS12 family. Part of the 30S ribosomal subunit. Contacts proteins S8 and S17. May interact with IF1 in the 30S initiation complex.

In terms of biological role, with S4 and S5 plays an important role in translational accuracy. Interacts with and stabilizes bases of the 16S rRNA that are involved in tRNA selection in the A site and with the mRNA backbone. Located at the interface of the 30S and 50S subunits, it traverses the body of the 30S subunit contacting proteins on the other side and probably holding the rRNA structure together. The combined cluster of proteins S8, S12 and S17 appears to hold together the shoulder and platform of the 30S subunit. In Christiangramia forsetii (strain DSM 17595 / CGMCC 1.15422 / KT0803) (Gramella forsetii), this protein is Small ribosomal subunit protein uS12.